Reading from the N-terminus, the 20-residue chain is Toxin b subunit beta (20 aa).

In terms of assembly, toxin b is a heterodimer composed of toxin alpha and toxin beta. Expressed by the venom gland.

The protein resides in the secreted. Functionally, binds to sodium channels (Nav) and affects the channel activation process. This chain is Toxin b subunit beta, found in Androctonus crassicauda (Arabian fat-tailed scorpion).